A 258-amino-acid polypeptide reads, in one-letter code: Imidazole glycerol phosphate synthase subunit HisF (258 aa).

Catalysis depends on residues Asp11 and Asp130.

It belongs to the HisA/HisF family. Heterodimer of HisH and HisF.

It is found in the cytoplasm. The catalysed reaction is 5-[(5-phospho-1-deoxy-D-ribulos-1-ylimino)methylamino]-1-(5-phospho-beta-D-ribosyl)imidazole-4-carboxamide + L-glutamine = D-erythro-1-(imidazol-4-yl)glycerol 3-phosphate + 5-amino-1-(5-phospho-beta-D-ribosyl)imidazole-4-carboxamide + L-glutamate + H(+). It functions in the pathway amino-acid biosynthesis; L-histidine biosynthesis; L-histidine from 5-phospho-alpha-D-ribose 1-diphosphate: step 5/9. Its function is as follows. IGPS catalyzes the conversion of PRFAR and glutamine to IGP, AICAR and glutamate. The HisF subunit catalyzes the cyclization activity that produces IGP and AICAR from PRFAR using the ammonia provided by the HisH subunit. In Blochmanniella floridana, this protein is Imidazole glycerol phosphate synthase subunit HisF.